Here is a 377-residue protein sequence, read N- to C-terminus: Unsaturated glucuronyl hydrolase (377 aa).

Catalysis depends on Asp-88, which acts as the Nucleophile. Asp-149 serves as the catalytic Proton donor.

Belongs to the glycosyl hydrolase 88 family. In terms of assembly, monomer.

Its subcellular location is the cytoplasm. It catalyses the reaction beta-D-Delta(4)-GlcA-(1-&gt;4)-beta-D-Glc-(1-&gt;4)-alpha-L-Rha-(1-&gt;3)-D-Glc + H2O = beta-D-Glc-(1-&gt;4)-alpha-L-Rha-(1-&gt;3)-D-Glc + 5-dehydro-4-deoxy-D-glucuronate. Partially inhibited by divalent metal ions such as calcium, copper, iron and mercury. Catalyzes the hydrolysis of oligosaccharides with unsaturated glucuronyl residues at the non-reducing terminal, to a sugar or an amino sugar, and an unsaturated D-glucuronic acid (GlcA), which is nonenzymatically converted immediately to alpha-keto acid. This is Unsaturated glucuronyl hydrolase (ugl) from Bacillus sp. (strain GL1).